A 589-amino-acid chain; its full sequence is Phenylalanine--tRNA ligase beta subunit (589 aa).

The B5 domain occupies 302–379 (LAYRKEMVRA…IAYGYNNIQM (78 aa)). Mg(2+)-binding residues include Asp357, Asp363, Glu366, and Asp367.

It belongs to the phenylalanyl-tRNA synthetase beta subunit family. Type 2 subfamily. In terms of assembly, heterotetramer; dimer of two heterodimers formed by FARSA and FARSB. It depends on Mg(2+) as a cofactor.

It localises to the cytoplasm. It carries out the reaction tRNA(Phe) + L-phenylalanine + ATP = L-phenylalanyl-tRNA(Phe) + AMP + diphosphate + H(+). In Homo sapiens (Human), this protein is Phenylalanine--tRNA ligase beta subunit (FARSB).